The chain runs to 366 residues: Gelsolin-like protein 2 (366 aa).

3 Gelsolin-like repeats span residues 55–139 (NFKV…DLFL), 177–252 (KHIV…HEFY), and 286–327 (KSTV…AQEK). The tract at residues 100–116 (KSTQDEYCVAAYKTVEL) is actin binding. The segment at 104 to 107 (DEYC) is actin-actin interfilament contact point.

It belongs to the villin/gelsolin family. In terms of assembly, interacts with actin monomers and filaments. As to expression, expressed in circular and longitudinal muscle, pseudohearts, pharynx and gizzard. Not expressed in seminal vesicles.

The protein resides in the cytoplasm. The protein localises to the cytoskeleton. Functionally, calcium-regulated protein that binds to the plus (or barbed) ends of actin monomers or filaments, preventing monomer exchange (end-blocking or capping). Can promote the assembly of monomers into filaments (nucleation) as well as sever existing filaments. This chain is Gelsolin-like protein 2, found in Lumbricus terrestris (Common earthworm).